Consider the following 465-residue polypeptide: Glycine--tRNA ligase (465 aa).

The substrate site is built by Arg-98 and Glu-174. Residues Arg-206–Glu-208, Phe-216–Phe-221, Glu-290–Leu-291, and Gly-334–Arg-337 each bind ATP. Phe-221 to Glu-225 lines the substrate pocket. Glu-330–Gly-334 contacts substrate.

The protein belongs to the class-II aminoacyl-tRNA synthetase family. Homodimer.

The protein resides in the cytoplasm. It carries out the reaction tRNA(Gly) + glycine + ATP = glycyl-tRNA(Gly) + AMP + diphosphate. Catalyzes the attachment of glycine to tRNA(Gly). The chain is Glycine--tRNA ligase from Agathobacter rectalis (strain ATCC 33656 / DSM 3377 / JCM 17463 / KCTC 5835 / VPI 0990) (Eubacterium rectale).